The chain runs to 506 residues: MEKVEHLNLNIQNILEDVDIDTASSSSDDEPEQAVVKQEKLEAGEQIEEQYDTDSDYDDDIVEFAEATGDFTKKLNAARLNTIGPNAARNRLTVDVERHADTSEDRKRKRVKDRADRATVEQVLDPRTRLVLFRLLQRGTLLNIDGCISTGKEANVYHATGTDNDLAIKIYKTSILTFKDRERYVTGEFRYRHGYCKSNPRKMVAVWAEKEMRNLARMHEVGLPVPKPHLLKGHVLVMDFLGKDGWPAPLLKNANLSQEDAEPMYVGLVRDMRRLYRECKLVHADLSEFNMLVHDGKLWIIDVSQSVEQDHPHALEFLRMDCNNVNKFFRELGVPVLSVRRLFEVIVDPLMSSKEMETIIEEERVLVNSEDDSLFMNAFIPHKLEHVLHFERDGKLAKEGVEANNPFQNIVSKIDLKGDGFGEEHDDSDDNDDEENGKKSRKKRAEPTEEEIQEKERKIAMHTRNREETAEERKERKAAVKEEKREQRKEKIPKHLKKRAHRQHMK.

The interval 22–52 is disordered; it reads TASSSSDDEPEQAVVKQEKLEAGEQIEEQYD. Residues 142 to 506 form the Protein kinase domain; it reads LNIDGCISTG…KKRAHRQHMK (365 aa). ATP contacts are provided by residues 148-156, Lys-169, and Leu-241; that span reads ISTGKEANV. Asp-285 (proton acceptor) is an active-site residue. Residue Asn-290 participates in ATP binding. The Mg(2+) site is built by Asn-290 and Asp-302. The active-site 4-aspartylphosphate intermediate is Asp-302. A disordered region spans residues 418–506; that stretch reads GDGFGEEHDD…KKRAHRQHMK (89 aa). Acidic residues predominate over residues 424-435; sequence EHDDSDDNDDEE. Basic and acidic residues predominate over residues 454–490; it reads EKERKIAMHTRNREETAEERKERKAAVKEEKREQRKE. Positions 491 to 506 are enriched in basic residues; the sequence is KIPKHLKKRAHRQHMK.

This sequence belongs to the protein kinase superfamily. RIO-type Ser/Thr kinase family. Mg(2+) is required as a cofactor. Expressed in vulva and uterine cells, uterine seam cells (utse), spermatheca and in the nervous system including chemosensory neurons in the head, nerve ring neurons (RID/RIF), inhibitory motor neurons (DA/DD/VA/VD), mechanosensory neurons (ALML/PLML) and tail sensory neurons (DVA//PDA). Also expressed in intestine and pharynx (procorpus) and rectal valve and gland.

It is found in the cytoplasm. It catalyses the reaction L-seryl-[protein] + ATP = O-phospho-L-seryl-[protein] + ADP + H(+). The catalysed reaction is L-threonyl-[protein] + ATP = O-phospho-L-threonyl-[protein] + ADP + H(+). Functionally, involved in the final steps of cytoplasmic maturation of the 40S ribosomal subunit. Despite the protein kinase domain is proposed to act predominantly as an ATPase. The catalytic activity regulates its dynamic association with the 40S subunit. Plays a role in oogenesis by regulating germ cell proliferation, progression through diplotene and diakinesis stages and oocyte maturation. Regulates germline development probably by regulating the phosphorylation of mpk-1. Involved in larval development. The sequence is that of Serine/threonine-protein kinase RIO1 from Caenorhabditis elegans.